The sequence spans 87 residues: Small ribosomal subunit protein bS20 (87 aa).

The span at 1–11 (MANIKSAKKRA) shows a compositional bias: basic residues. The interval 1–27 (MANIKSAKKRAVQSEKRRQHNASQRSM) is disordered.

The protein belongs to the bacterial ribosomal protein bS20 family.

Functionally, binds directly to 16S ribosomal RNA. The sequence is that of Small ribosomal subunit protein bS20 from Histophilus somni (strain 129Pt) (Haemophilus somnus).